Reading from the N-terminus, the 500-residue chain is Cytochrome P450 2D27 (500 aa).

Cys446 provides a ligand contact to heme.

The protein belongs to the cytochrome P450 family. It depends on heme as a cofactor. Expressed in liver, but not in kidney, small intestine, and brain.

It is found in the endoplasmic reticulum membrane. It localises to the microsome membrane. Functionally, has bufuralol 1'-hydroxylase and debrisoquine 4-hydroxylase activities. This chain is Cytochrome P450 2D27 (CYP2D27), found in Mesocricetus auratus (Golden hamster).